Here is a 229-residue protein sequence, read N- to C-terminus: Large ribosomal subunit protein uL1 (229 aa).

This sequence belongs to the universal ribosomal protein uL1 family. As to quaternary structure, part of the 50S ribosomal subunit.

Functionally, binds directly to 23S rRNA. The L1 stalk is quite mobile in the ribosome, and is involved in E site tRNA release. Protein L1 is also a translational repressor protein, it controls the translation of the L11 operon by binding to its mRNA. In Streptococcus gordonii (strain Challis / ATCC 35105 / BCRC 15272 / CH1 / DL1 / V288), this protein is Large ribosomal subunit protein uL1.